A 252-amino-acid chain; its full sequence is Adenosylcobinamide-GDP ribazoletransferase (252 aa).

7 helical membrane passes run 4–24 (LLLL…LPYI), 35–55 (LVPM…GGMN), 65–85 (SALV…DGAM), 102–122 (VMAD…ILLL), 178–198 (LLPG…VNNH), 201–221 (LITV…AAWF), and 232–252 (TYGA…TILT).

It belongs to the CobS family. Mg(2+) serves as cofactor.

It localises to the cell inner membrane. The catalysed reaction is alpha-ribazole + adenosylcob(III)inamide-GDP = adenosylcob(III)alamin + GMP + H(+). It catalyses the reaction alpha-ribazole 5'-phosphate + adenosylcob(III)inamide-GDP = adenosylcob(III)alamin 5'-phosphate + GMP + H(+). It functions in the pathway cofactor biosynthesis; adenosylcobalamin biosynthesis; adenosylcobalamin from cob(II)yrinate a,c-diamide: step 7/7. Its function is as follows. Joins adenosylcobinamide-GDP and alpha-ribazole to generate adenosylcobalamin (Ado-cobalamin). Also synthesizes adenosylcobalamin 5'-phosphate from adenosylcobinamide-GDP and alpha-ribazole 5'-phosphate. The polypeptide is Adenosylcobinamide-GDP ribazoletransferase (Trichormus variabilis (strain ATCC 29413 / PCC 7937) (Anabaena variabilis)).